We begin with the raw amino-acid sequence, 359 residues long: Outer membrane protein A (359 aa).

The signal sequence occupies residues 1–21 (MKKTAIALAVALAGFATVAQA). 8 consecutive transmembrane segments (beta stranded) span residues 27–37 (TWYTGAKLGWS), 62–73 (QLGAGAFLGYQA), 77–85 (LGFELGYDW), 103–114 (QGVQLAAKLSYP), 119–127 (LDIYTRLGG), 154–163 (PLAAVGVEYA), 168–175 (WATRLDYQ), and 194–202 (MLSLGVSYR). Repeat copies occupy residues 210-211 (AP), 212-213 (AP), 214-215 (AP), 216-217 (AP), and 218-219 (AP). A 5 X 2 AA tandem repeats of A-P region spans residues 210 to 219 (APAPAPAPAP). Residues 221-351 (VETKRFTLKS…RVEIEVKGIK (131 aa)) enclose the OmpA-like domain. An intrachain disulfide couples Cys-322 to Cys-336.

It belongs to the outer membrane OOP (TC 1.B.6) superfamily. OmpA family. As to quaternary structure, monomer and homodimer.

Its subcellular location is the cell outer membrane. With TolR probably plays a role in maintaining the position of the peptidoglycan cell wall in the periplasm. Acts as a porin with low permeability that allows slow penetration of small solutes; an internal gate slows down solute passage. The chain is Outer membrane protein A from Serratia marcescens.